The chain runs to 92 residues: C-C motif chemokine 4 (92 aa).

The first 23 residues, 1–23 (MKLCVTVLSLLMLVAAFCSPALS), serve as a signal peptide directing secretion. 2 disulfide bridges follow: C34-C58 and C35-C74.

The protein belongs to the intercrine beta (chemokine CC) family. As to quaternary structure, homodimer and heterodimer of MIP-1-alpha(4-69) and MIP-1-beta(3-69). Post-translationally, N-terminal processed form MIP-1-beta(3-69) is produced by proteolytic cleavage after secretion from peripheral blood lymphocytes.

It is found in the secreted. Functionally, monokine with inflammatory and chemokinetic properties. Binds to CCR5. One of the major HIV-suppressive factors produced by CD8+ T-cells. Recombinant MIP-1-beta induces a dose-dependent inhibition of different strains of HIV-1, HIV-2, and simian immunodeficiency virus (SIV). The processed form MIP-1-beta(3-69) retains the abilities to induce down-modulation of surface expression of the chemokine receptor CCR5 and to inhibit the CCR5-mediated entry of HIV-1 in T-cells. MIP-1-beta(3-69) is also a ligand for CCR1 and CCR2 isoform B. The protein is C-C motif chemokine 4 (CCL4) of Homo sapiens (Human).